A 522-amino-acid chain; its full sequence is Peptide chain release factor 3 (522 aa).

The region spanning 10 to 277 (ASRKTFAIIS…TFVDFAPAPS (268 aa)) is the tr-type G domain. Residues 19–26 (SHPDAGKT), 87–91 (DTPGH), and 141–144 (NKMD) contribute to the GTP site.

This sequence belongs to the TRAFAC class translation factor GTPase superfamily. Classic translation factor GTPase family. PrfC subfamily.

The protein resides in the cytoplasm. Functionally, increases the formation of ribosomal termination complexes and stimulates activities of RF-1 and RF-2. It binds guanine nucleotides and has strong preference for UGA stop codons. It may interact directly with the ribosome. The stimulation of RF-1 and RF-2 is significantly reduced by GTP and GDP, but not by GMP. The chain is Peptide chain release factor 3 from Listeria monocytogenes serovar 1/2a (strain ATCC BAA-679 / EGD-e).